We begin with the raw amino-acid sequence, 716 residues long: Amino-acid acetyltransferase, mitochondrial (716 aa).

The N-terminal 44 residues, 1-44 (MSPHTGWPRTVNSSLLKKHRSSLCTCQHTSSFLPRSFSTTADRH), are a transit peptide targeting the mitochondrion. 2 disordered regions span residues 99–119 (YPKS…APTL) and 487–508 (LSSS…TVYP). Residues 102–112 (SPDENKPEPEK) show a composition bias toward basic and acidic residues. Polar residues predominate over residues 497 to 508 (GPTNNGQGTVYP). The 170-residue stretch at 537–706 (SRPRLKLDDP…YEAVCRSTQP (170 aa)) folds into the N-acetyltransferase domain.

The protein belongs to the acetyltransferase family.

It localises to the mitochondrion. The catalysed reaction is L-glutamate + acetyl-CoA = N-acetyl-L-glutamate + CoA + H(+). Its pathway is amino-acid biosynthesis; L-arginine biosynthesis; N(2)-acetyl-L-ornithine from L-glutamate: step 1/4. Its function is as follows. N-acetylglutamate synthase involved in arginine biosynthesis. This Neosartorya fischeri (strain ATCC 1020 / DSM 3700 / CBS 544.65 / FGSC A1164 / JCM 1740 / NRRL 181 / WB 181) (Aspergillus fischerianus) protein is Amino-acid acetyltransferase, mitochondrial (arg2).